A 753-amino-acid polypeptide reads, in one-letter code: MAAAVGPLGDGELWQSWLPNHVVFLRLREGVRNQSPAEAEKPAASTSPSCPSLPPHLPTRNLVFGLGGELFLWDAEGSAFLVVRLRGPSGGGVEPPLSQYQRLLCINPPLFEIHQVLLSPTQHHVALIGSKGLMALELPQRWGKDSEFEGGKATVNCSTIPIAERFFTSSTSLTLKHAAWYPSEMLDPHIVLLTSDNVIRIYSLREPQTPTKVIVLSEAEEESLILNKGRAYTASLGETAVAFDFGPLVTVSKNIFEQKDRDVVAYPLYILYENGETFLTYVSLLHSPGNIGKLLGPLPMHPAAEDNYGYDACAILCLPCVPNILVIATESGMLYHCVVLEGEEEDDQTLEKSWDPRADFIPSLYVFECVELELALKLASGEDDPFASDFSCPIKLHRDPKCPSRYHCSHEAGVHSVGLTWIHKLHKFLGSDEEDKDSLQELTAEQKCFVEHILCTKPLPCRQPAPIRGFWIVPDILGPTMICITSTYECLIRPLLSTVHPASPPLLCTQEDAEVAESPLRILAETPDSFEKHIKRILQRSAANPAFLKNCSARSSEKDLAPPPEECLQLISRATQVFREQYILKQDLAKEEIQRRVKLLCDQKRKQLEDLNYCREERVSHLFRKSLREMAERLADKYEEAKEKQEDIMNRMKKVLHSFHAQLPVLSDSERDMKKELQLIPDQLRHLGNAIKQVTMKKDYQQRKMEKVLSPQKPTITLSAYQRKCIQSILKEEGEHIREMVKQINDIRNHVTF.

Alanine 2 carries the post-translational modification N-acetylalanine. Residues serine 35, serine 380, serine 438, and serine 518 each carry the phosphoserine modification. At threonine 526 the chain carries Phosphothreonine. Serine 541 is subject to Phosphoserine. A coiled-coil region spans residues phenylalanine 623–leucine 663. Serine 710 is modified (phosphoserine).

Interacts with NUP214/CAN. Interacts with NUP62 and NUP98.

Its subcellular location is the nucleus. It localises to the nuclear pore complex. Component of nuclear pore complex. This chain is Nuclear pore complex protein Nup88 (Nup88), found in Mus musculus (Mouse).